The sequence spans 664 residues: Macrolide export ATP-binding/permease protein MacB (664 aa).

One can recognise an ABC transporter domain in the interval 8-245 (LELVDVHRTY…AGPSVPLTLD (238 aa)). Position 44–51 (44–51 (GSSGSGKS)) interacts with ATP. 4 helical membrane passes run 283 to 303 (LLSV…MALG), 543 to 563 (GAIA…IMLV), 602 to 622 (IIGI…AGWA), and 627 to 647 (IVSI…FGLW).

Belongs to the ABC transporter superfamily. Macrolide exporter (TC 3.A.1.122) family. Homodimer.

Its subcellular location is the cell inner membrane. In terms of biological role, non-canonical ABC transporter that contains transmembrane domains (TMD), which form a pore in the inner membrane, and an ATP-binding domain (NBD), which is responsible for energy generation. Confers resistance against macrolides. This Chlorobium luteolum (strain DSM 273 / BCRC 81028 / 2530) (Pelodictyon luteolum) protein is Macrolide export ATP-binding/permease protein MacB.